The chain runs to 962 residues: Leucine--tRNA ligase (962 aa).

Residues 40–51 (PYPSGAGLHVGH) carry the 'HIGH' region motif. The disordered stretch occupies residues 548–570 (SRKLSGQHDEPNSNVTPSAVEGS). The 'KMSKS' region motif lies at 737 to 741 (KMSKS). An ATP-binding site is contributed by Lys-740.

It belongs to the class-I aminoacyl-tRNA synthetase family.

The protein resides in the cytoplasm. It catalyses the reaction tRNA(Leu) + L-leucine + ATP = L-leucyl-tRNA(Leu) + AMP + diphosphate. This is Leucine--tRNA ligase from Christiangramia forsetii (strain DSM 17595 / CGMCC 1.15422 / KT0803) (Gramella forsetii).